A 4388-amino-acid chain; its full sequence is Intermembrane lipid transfer protein VPS13D (4388 aa).

In terms of domain architecture, Chorein N-terminal spans L2–Q115. A Phosphoserine modification is found at S663. The segment at Q745 to G796 is disordered. Over residues N747 to S756 the composition is skewed to basic and acidic residues. A compositionally biased stretch (pro residues) spans A773–E782. Residues S1034, S1038, S1042, S1138, and S1341 each carry the phosphoserine modification. The disordered stretch occupies residues A1563–G1582. Phosphoserine is present on residues S1598, S1603, and S1699. Disordered stretches follow at residues R1741–P1771, Q2070–M2108, and F2122–S2145. Phosphothreonine is present on T1761. Phosphoserine is present on S1765. Residues V2123–S2144 are compositionally biased toward polar residues. S2435, S2671, S2861, S2864, and S2983 each carry phosphoserine. One can recognise a UBA domain in the interval T2633–N2676. One can recognise an SHR-BD domain in the interval L3276–L3558. Position 3524 is an N6-acetyllysine (K3524).

Belongs to the VPS13 family. In terms of tissue distribution, widely expressed.

In terms of biological role, mediates the transfer of lipids between membranes at organelle contact sites. Functions in promoting mitochondrial clearance by mitochondrial autophagy (mitophagy), also possibly by positively regulating mitochondrial fission. Mitophagy plays an important role in regulating cell health and mitochondrial size and homeostasis. The protein is Intermembrane lipid transfer protein VPS13D of Homo sapiens (Human).